The following is a 77-amino-acid chain: uncharacterized protein (77 aa).

This is an uncharacterized protein from Treponema pallidum (strain Nichols).